The chain runs to 856 residues: TPR repeat-containing protein TP_0123 (856 aa).

TPR repeat units follow at residues 107–140, 523–556, and 603–636; these read YAAVRCVRALYQTLDTYEKQVKEFRILMDVVADD, YRTFSLLGFLTIGQSKFEDALVYFGYALDDAEQL, and TVSLFMQGRISLSLGEYAQARRCFDEAADFALQY.

This chain is TPR repeat-containing protein TP_0123, found in Treponema pallidum (strain Nichols).